Reading from the N-terminus, the 591-residue chain is L-fucose isomerase (591 aa).

Catalysis depends on proton acceptor residues E337 and D361. Residues E337, D361, and H528 each coordinate Mn(2+).

This sequence belongs to the L-fucose isomerase family. As to quaternary structure, homohexamer. Mn(2+) is required as a cofactor.

The protein resides in the cytoplasm. The enzyme catalyses L-fucose = L-fuculose. It participates in carbohydrate degradation; L-fucose degradation; L-lactaldehyde and glycerone phosphate from L-fucose: step 1/3. Its function is as follows. Converts the aldose L-fucose into the corresponding ketose L-fuculose. The polypeptide is L-fucose isomerase (Escherichia coli (strain 55989 / EAEC)).